Consider the following 461-residue polypeptide: Aspartic proteinase NANA, chloroplast (461 aa).

N86 carries an N-linked (GlcNAc...) asparagine glycan. In terms of domain architecture, Peptidase A1 spans 106-456; sequence YFTEIRVGTP…DLMASTLSFA (351 aa). D124 is a catalytic residue. N274 is a glycosylation site (N-linked (GlcNAc...) asparagine). D338 is a catalytic residue. N386 carries an N-linked (GlcNAc...) asparagine glycan.

The protein belongs to the peptidase A1 family.

Its subcellular location is the plastid. It localises to the chloroplast. Repressed by pepstatin A. Aspartic proteinase that can use azocasein as substrate and regulates endogenous sugar levels (e.g. sucrose, glucose and fructose) by modulating starch accumulation and remobilization. Influences general morphology and development. The protein is Aspartic proteinase NANA, chloroplast of Arabidopsis thaliana (Mouse-ear cress).